The primary structure comprises 160 residues: Cytochrome b6-f complex subunit 4 (160 aa).

3 helical membrane-spanning segments follow: residues 36-56, 95-115, and 131-151; these read LLYV…GLSV, LLGV…PFIE, and LTFI…CVPI.

Belongs to the cytochrome b family. PetD subfamily. The 4 large subunits of the cytochrome b6-f complex are cytochrome b6, subunit IV (17 kDa polypeptide, petD), cytochrome f and the Rieske protein, while the 4 small subunits are petG, petL, petM and petN. The complex functions as a dimer.

The protein resides in the plastid. It localises to the chloroplast thylakoid membrane. In terms of biological role, component of the cytochrome b6-f complex, which mediates electron transfer between photosystem II (PSII) and photosystem I (PSI), cyclic electron flow around PSI, and state transitions. This chain is Cytochrome b6-f complex subunit 4, found in Phaeodactylum tricornutum (strain CCAP 1055/1).